Here is a 354-residue protein sequence, read N- to C-terminus: Virulence plasmid protein pGP2-D (354 aa).

The chain is Virulence plasmid protein pGP2-D from Chlamydia trachomatis serovar L2 (strain ATCC VR-902B / DSM 19102 / 434/Bu).